Here is a 144-residue protein sequence, read N- to C-terminus: Small ribosomal subunit protein bS6 (144 aa).

The interval 97 to 144 (DTEQSLIMKSKDEKGDKPERSERRRRDDEEGDAAPAATDTDGDNAEAA) is disordered. Residues 105 to 124 (KSKDEKGDKPERSERRRRDD) are compositionally biased toward basic and acidic residues.

Belongs to the bacterial ribosomal protein bS6 family.

Its function is as follows. Binds together with bS18 to 16S ribosomal RNA. The chain is Small ribosomal subunit protein bS6 from Xanthomonas campestris pv. campestris (strain 8004).